A 336-amino-acid chain; its full sequence is tRNA-splicing endonuclease (336 aa).

Active-site residues include tyrosine 271, histidine 282, and lysine 313.

It belongs to the tRNA-intron endonuclease family. Archaeal long subfamily. Homodimer.

It carries out the reaction pretRNA = a 3'-half-tRNA molecule with a 5'-OH end + a 5'-half-tRNA molecule with a 2',3'-cyclic phosphate end + an intron with a 2',3'-cyclic phosphate and a 5'-hydroxyl terminus.. Endonuclease that removes tRNA introns. Cleaves pre-tRNA at the 5'- and 3'-splice sites to release the intron. The products are an intron and two tRNA half-molecules bearing 2',3' cyclic phosphate and 5'-OH termini. Recognizes a pseudosymmetric substrate in which 2 bulged loops of 3 bases are separated by a stem of 4 bp. This Natronomonas pharaonis (strain ATCC 35678 / DSM 2160 / CIP 103997 / JCM 8858 / NBRC 14720 / NCIMB 2260 / Gabara) (Halobacterium pharaonis) protein is tRNA-splicing endonuclease.